The sequence spans 572 residues: Mitochondrial chaperone TCM62 (572 aa).

Residues 1–16 constitute a mitochondrion transit peptide; that stretch reads MLRNCLRKLGNHQTKC. Over 17–471 the chain is Mitochondrial matrix; the sequence is SVKTLHTPIY…KANEPNFMTK (455 aa). Residues 472–488 traverse the membrane as a helical segment; it reads VGINAVLSAVILPSEVA. Topologically, residues 489–572 are mitochondrial intermembrane; that stretch reads FKNAYGYNYY…VYKKPERHKA (84 aa).

It belongs to the chaperonin (HSP60) family. As to quaternary structure, forms a high molecular mass protein complex of approximately 850 kDa.

The protein resides in the mitochondrion inner membrane. Functionally, chaperone. Required for the assembly of succinate dehydrogenase subunits. Ensures mitochondrial gene expression at elevated temperatures and prevents heat-aggregation of the ribosomal subunit VAR1. In Saccharomyces cerevisiae (strain ATCC 204508 / S288c) (Baker's yeast), this protein is Mitochondrial chaperone TCM62 (TCM62).